The primary structure comprises 67 residues: DNA-directed RNA polymerase subunit omega (67 aa).

It belongs to the RNA polymerase subunit omega family. In terms of assembly, the RNAP catalytic core consists of 2 alpha, 1 beta, 1 beta' and 1 omega subunit. When a sigma factor is associated with the core the holoenzyme is formed, which can initiate transcription.

It catalyses the reaction RNA(n) + a ribonucleoside 5'-triphosphate = RNA(n+1) + diphosphate. Its function is as follows. Promotes RNA polymerase assembly. Latches the N- and C-terminal regions of the beta' subunit thereby facilitating its interaction with the beta and alpha subunits. The sequence is that of DNA-directed RNA polymerase subunit omega from Polynucleobacter asymbioticus (strain DSM 18221 / CIP 109841 / QLW-P1DMWA-1) (Polynucleobacter necessarius subsp. asymbioticus).